Reading from the N-terminus, the 448-residue chain is Glutamyl-tRNA reductase (448 aa).

Substrate is bound by residues 49 to 52 (TCNR), serine 109, 114 to 116 (ETQ), and glutamine 120. Cysteine 50 acts as the Nucleophile in catalysis. Residue 189–194 (GAGETG) coordinates NADP(+). The disordered stretch occupies residues 427-448 (PVDEVEETDATSAKAPLRALMR).

The protein belongs to the glutamyl-tRNA reductase family. In terms of assembly, homodimer.

It catalyses the reaction (S)-4-amino-5-oxopentanoate + tRNA(Glu) + NADP(+) = L-glutamyl-tRNA(Glu) + NADPH + H(+). It participates in porphyrin-containing compound metabolism; protoporphyrin-IX biosynthesis; 5-aminolevulinate from L-glutamyl-tRNA(Glu): step 1/2. Its function is as follows. Catalyzes the NADPH-dependent reduction of glutamyl-tRNA(Glu) to glutamate 1-semialdehyde (GSA). This chain is Glutamyl-tRNA reductase, found in Exiguobacterium sp. (strain ATCC BAA-1283 / AT1b).